The chain runs to 382 residues: 26S proteasome non-ATPase regulatory subunit 6 (382 aa).

In terms of domain architecture, PCI spans 186–354; sequence QFKEASDLYL…GVIETTRSDA (169 aa).

The protein belongs to the proteasome subunit S10 family.

Acts as a regulatory subunit of the 26S proteasome which is involved in the ATP-dependent degradation of ubiquitinated proteins. This chain is 26S proteasome non-ATPase regulatory subunit 6 (psmD6), found in Dictyostelium discoideum (Social amoeba).